We begin with the raw amino-acid sequence, 937 residues long: Protein translocase subunit SecA (937 aa).

Residues Gln-90, 108-112, and Asp-509 contribute to the ATP site; that span reads GEGKT.

Belongs to the SecA family. In terms of assembly, monomer and homodimer. Part of the essential Sec protein translocation apparatus which comprises SecA, SecYEG and auxiliary proteins SecDF. Other proteins may also be involved.

It is found in the cell inner membrane. It localises to the cellular thylakoid membrane. The protein localises to the cytoplasm. It carries out the reaction ATP + H2O + cellular proteinSide 1 = ADP + phosphate + cellular proteinSide 2.. Part of the Sec protein translocase complex. Interacts with the SecYEG preprotein conducting channel. Has a central role in coupling the hydrolysis of ATP to the transfer of proteins into and across the cell membrane, serving as an ATP-driven molecular motor driving the stepwise translocation of polypeptide chains across the membrane. In terms of biological role, probably participates in protein translocation into and across both the cytoplasmic and thylakoid membranes in cyanobacterial cells. The chain is Protein translocase subunit SecA from Parasynechococcus marenigrum (strain WH8102).